The sequence spans 202 residues: MADS-box transcription factor 33 (202 aa).

In terms of domain architecture, MADS-box spans 1 to 61 (MVRGKVQMRR…GKLHELATNG (61 aa)). The 91-residue stretch at 87 to 177 (QQVAEQGIFL…QEKVKEQQKL (91 aa)) folds into the K-box domain.

In terms of tissue distribution, expressed in seedling roots.

Its subcellular location is the nucleus. Functionally, probable transcription factor. The chain is MADS-box transcription factor 33 (MADS33) from Oryza sativa subsp. japonica (Rice).